The chain runs to 124 residues: Large ribosomal subunit protein bL21 (124 aa).

Belongs to the bacterial ribosomal protein bL21 family. Part of the 50S ribosomal subunit. Contacts protein L20.

Its function is as follows. This protein binds to 23S rRNA in the presence of protein L20. This is Large ribosomal subunit protein bL21 from Sinorhizobium medicae (strain WSM419) (Ensifer medicae).